Here is a 59-residue protein sequence, read N- to C-terminus: Large ribosomal subunit protein uL30 (59 aa).

Belongs to the universal ribosomal protein uL30 family. As to quaternary structure, part of the 50S ribosomal subunit.

This chain is Large ribosomal subunit protein uL30, found in Rhodococcus erythropolis (strain PR4 / NBRC 100887).